The chain runs to 462 residues: uncharacterized protein (462 aa).

This is an uncharacterized protein from Acanthamoeba polyphaga (Amoeba).